A 66-amino-acid polypeptide reads, in one-letter code: Large ribosomal subunit protein bL35 (66 aa).

The span at 1 to 46 shows a compositional bias: basic residues; that stretch reads MPKMKTHRASAKRFKRTGNGGLKRHHAFTGHRFHGKTKKQRRHLRK. Residues 1-50 are disordered; the sequence is MPKMKTHRASAKRFKRTGNGGLKRHHAFTGHRFHGKTKKQRRHLRKAAMV.

The protein belongs to the bacterial ribosomal protein bL35 family.

This chain is Large ribosomal subunit protein bL35, found in Lactobacillus delbrueckii subsp. bulgaricus (strain ATCC 11842 / DSM 20081 / BCRC 10696 / JCM 1002 / NBRC 13953 / NCIMB 11778 / NCTC 12712 / WDCM 00102 / Lb 14).